Reading from the N-terminus, the 385-residue chain is GTP cyclohydrolase-2 (385 aa).

A DHBP synthase-like region spans residues 1 to 189 (MYADAPSDSA…RDIADYRVHV (189 aa)). The GTP cyclohydrolase II stretch occupies residues 190–385 (VRTLRRVAEA…TKAERSGHMF (196 aa)). Residue 240-244 (RLHSE) coordinates GTP. Zn(2+)-binding residues include Cys-245, Cys-256, and Cys-258. GTP contacts are provided by residues Gln-261, 283 to 285 (EGR), and Thr-305. Asp-317 acts as the Proton acceptor in catalysis. The Nucleophile role is filled by Arg-319. Residues Thr-340 and Lys-345 each contribute to the GTP site.

It in the N-terminal section; belongs to the DHBP synthase family. In the C-terminal section; belongs to the GTP cyclohydrolase II family. Zn(2+) serves as cofactor.

It catalyses the reaction GTP + 4 H2O = 2,5-diamino-6-hydroxy-4-(5-phosphoribosylamino)-pyrimidine + formate + 2 phosphate + 3 H(+). It participates in cofactor biosynthesis; riboflavin biosynthesis; 5-amino-6-(D-ribitylamino)uracil from GTP: step 1/4. In terms of biological role, catalyzes the conversion of GTP to 2,5-diamino-6-ribosylamino-4(3H)-pyrimidinone 5'-phosphate (DARP), formate and pyrophosphate. This is GTP cyclohydrolase-2 (ribA) from Azospirillum brasilense.